The following is a 282-amino-acid chain: Proteasome subunit beta (282 aa).

Residues 1–54 constitute a propeptide, removed in mature form; by autocatalysis; it reads MGSHRDLPAGMVNHIFTNSGISSFTEFVGSYAPDLLPGRNETLAAPVGDRIPHA. The active-site Nucleophile is the threonine 55.

It belongs to the peptidase T1B family. As to quaternary structure, the 20S proteasome core is composed of 14 alpha and 14 beta subunits that assemble into four stacked heptameric rings, resulting in a barrel-shaped structure. The two inner rings, each composed of seven catalytic beta subunits, are sandwiched by two outer rings, each composed of seven alpha subunits. The catalytic chamber with the active sites is on the inside of the barrel. Has a gated structure, the ends of the cylinder being occluded by the N-termini of the alpha-subunits. Is capped by the proteasome-associated ATPase, ARC.

It is found in the cytoplasm. It carries out the reaction Cleavage of peptide bonds with very broad specificity.. Its pathway is protein degradation; proteasomal Pup-dependent pathway. Its activity is regulated as follows. The formation of the proteasomal ATPase ARC-20S proteasome complex, likely via the docking of the C-termini of ARC into the intersubunit pockets in the alpha-rings, may trigger opening of the gate for substrate entry. Interconversion between the open-gate and close-gate conformations leads to a dynamic regulation of the 20S proteasome proteolysis activity. Component of the proteasome core, a large protease complex with broad specificity involved in protein degradation. This chain is Proteasome subunit beta, found in Streptosporangium roseum (strain ATCC 12428 / DSM 43021 / JCM 3005 / KCTC 9067 / NCIMB 10171 / NRRL 2505 / NI 9100).